A 707-amino-acid chain; its full sequence is MVKLAKAGKTHGEAKKMAPPPKEVEEDSEDEEMSEDEDDSSGEEEVVIPQKKGKKATTTPAKKVVVSQTKKAAVPTPAKKAAVTPGKKAVATPAKKNITPAKVIPTPGKKGAAQAKALVPTPGKKGAATPAKGAKNGKNAKKEDSDEDEDEEDEDDSDEDEDDEEEDEFEPPIVKGVKPAKAAPAAPASEDEEDDEDEDDEEDDDEEEEDDSEEEVMEITTAKGKKTPAKVVPMKAKSVAEEEDDEEEDEDDEDEDDEEEDDEDDDEEEEEEEPVKAAPGKRKKEMTKQKEAPEAKKQKVEGSEPTTPFNLFIGNLNPNKSVNELKFAISELFAKNDLAVVDVRTGTNRKFGYVDFESAEDLEKALELTGLKVFGNEIKLEKPKGRDSKKVRAARTLLAKNLSFNITEDELKEVFEDAMEIRLVSQDGKSKGIAYIEFKSEADAEKNLEEKQGAEIDGRSVSLYYTGEKGQRQERTGKTSTWSGESKTLVLSNLSYSATKETLEEVFEKATFIKVPQNPHGKPKGYAFIEFASFEDAKEALNSCNKMEIEGRTIRLELQGSNSRSQPSKTLFVKGLSEDTTEETLKESFEGSVRARIVTDRETGSSKGFGFVDFNSEEDAKAAKEAMEDGEIDGNKVTLDWAKPKGEGGFGGRGGGRGGFGGRGGGRGGRGGFGGRGRGGFGGRGGFRGGRGGGGDFKPQGKKTKFE.

The tract at residues 1–308 (MVKLAKAGKT…KVEGSEPTTP (308 aa)) is disordered. Lysine 9, lysine 15, and lysine 16 each carry N6-acetyllysine. The segment covering 24 to 46 (VEEDSEDEEMSEDEDDSSGEEEV) has biased composition (acidic residues). Phosphoserine is present on residues serine 28, serine 34, serine 40, and serine 41. The span at 56–92 (ATTTPAKKVVVSQTKKAAVPTPAKKAAVTPGKKAVAT) shows a compositional bias: low complexity. Copy 1 of the repeat occupies 58–65 (TTPAKKVV). An 8 X 8 AA tandem repeats of X-T-P-X-K-K-X-X region spans residues 58-135 (TTPAKKVVVS…GAATPAKGAK (78 aa)). Serine 67 carries the phosphoserine modification. Threonine 69, threonine 76, threonine 84, and threonine 92 each carry phosphothreonine. 3 tandem repeats follow at residues 75-82 (PTPAKKAA), 83-90 (VTPGKKAV), and 91-98 (ATPAKKNI). Lysine 96 carries the post-translational modification N6-acetyllysine. Phosphothreonine is present on threonine 99. A 5; truncated repeat occupies 99-104 (TPAKVI). Lysine 102 carries the N6-acetyllysine modification. The stretch at 105–112 (PTPGKKGA) is repeat 6. At threonine 106 the chain carries Phosphothreonine. N6-acetyllysine is present on residues lysine 109 and lysine 116. Tandem repeats lie at residues 120–127 (PTPGKKGA) and 128–135 (ATPAKGAK). Residue threonine 121 is modified to Phosphothreonine. The span at 121–137 (TPGKKGAATPAKGAKNG) shows a compositional bias: low complexity. N6-acetyllysine is present on lysine 124. A phosphoserine mark is found at serine 145 and serine 157. Positions 145-170 (SDEDEDEEDEDDSDEDEDDEEEDEFE) are enriched in acidic residues. A compositionally biased stretch (low complexity) spans 179 to 188 (PAKAAPAAPA). 2 positions are modified to phosphoserine: serine 189 and serine 212. Acidic residues predominate over residues 189-217 (SEDEEDDEDEDDEEDDDEEEEDDSEEEVM). Threonine 220 bears the Phosphothreonine mark. The segment covering 241–273 (EEEDDEEEDEDDEDEDDEEEDDEDDDEEEEEEE) has biased composition (acidic residues). A compositionally biased stretch (basic and acidic residues) spans 286–302 (MTKQKEAPEAKKQKVEG). Lysine 299 is covalently cross-linked (Glycyl lysine isopeptide (Lys-Gly) (interchain with G-Cter in SUMO1); alternate). Residue lysine 299 forms a Glycyl lysine isopeptide (Lys-Gly) (interchain with G-Cter in SUMO2); alternate linkage. Position 303 is a phosphoserine (serine 303). 2 RRM domains span residues 309–385 (FNLF…KPKG) and 395–468 (RTLL…YTGE). Lysine 320 carries the post-translational modification N6-acetyllysine. A Glycyl lysine isopeptide (Lys-Gly) (interchain with G-Cter in SUMO1); alternate cross-link involves residue lysine 326. Lysine 326 participates in a covalent cross-link: Glycyl lysine isopeptide (Lys-Gly) (interchain with G-Cter in SUMO2); alternate. Position 350 is an N6-acetyllysine (lysine 350). Serine 358 is modified (phosphoserine). The residue at position 369 (threonine 369) is a Phosphothreonine. Residue lysine 372 forms a Glycyl lysine isopeptide (Lys-Gly) (interchain with G-Cter in SUMO2) linkage. Residue lysine 379 forms a Glycyl lysine isopeptide (Lys-Gly) (interchain with G-Cter in SUMO2); alternate linkage. An N6-acetyllysine; alternate modification is found at lysine 379. Residue lysine 400 is modified to N6-acetyllysine. At serine 403 the chain carries Phosphoserine. Residue threonine 407 is modified to Phosphothreonine. N6-acetyllysine is present on residues lysine 429 and lysine 446. Serine 460 and serine 462 each carry phosphoserine. N6-acetyllysine occurs at positions 469 and 478. RRM domains are found at residues 487 to 561 (KTLV…LQGS) and 569 to 644 (KTLF…WAKP). Lysine 514 participates in a covalent cross-link: Glycyl lysine isopeptide (Lys-Gly) (interchain with G-Cter in SUMO2); alternate. An N6-acetyllysine; alternate modification is found at lysine 514. N6-acetyllysine is present on residues lysine 522 and lysine 569. A Glycyl lysine isopeptide (Lys-Gly) (interchain with G-Cter in SUMO2); alternate cross-link involves residue lysine 574. Lysine 574 carries the N6-acetyllysine; alternate modification. Position 577 is a phosphoserine (serine 577). Lysine 586 is covalently cross-linked (Glycyl lysine isopeptide (Lys-Gly) (interchain with G-Cter in SUMO1); alternate). Lysine 586 is covalently cross-linked (Glycyl lysine isopeptide (Lys-Gly) (interchain with G-Cter in SUMO2); alternate). Residues serine 588 and serine 616 each carry the phosphoserine modification. Lysine 621 participates in a covalent cross-link: Glycyl lysine isopeptide (Lys-Gly) (interchain with G-Cter in SUMO2). The disordered stretch occupies residues 639 to 707 (LDWAKPKGEG…KPQGKKTKFE (69 aa)). Lysine 643 is modified (N6-acetyllysine). Over residues 647-696 (EGGFGGRGGGRGGFGGRGGGRGGRGGFGGRGRGGFGGRGGFRGGRGGGGD) the composition is skewed to gly residues. Arginine 653, arginine 657, arginine 663, arginine 667, arginine 670, arginine 676, arginine 678, arginine 684, and arginine 688 each carry asymmetric dimethylarginine. At arginine 691 the chain carries Asymmetric dimethylarginine; alternate. Position 691 is an omega-N-methylarginine; alternate (arginine 691).

Identified in a IGF2BP1-dependent mRNP granule complex containing untranslated mRNAs. Component of the SWAP complex that consists of NPM1, NCL/nucleolin, PARP1 and SWAP70. Component of a complex which is at least composed of HTATSF1/Tat-SF1, the P-TEFb complex components CDK9 and CCNT1, RNA polymerase II, SUPT5H, and NCL/nucleolin. Interacts with AICDA. Interacts with APTX. Interacts with C1QBP. Interacts with ERBB4. Interacts (via C-terminus) with FMR1 isoform 6 (via N-terminus). Interacts with GZF1; this interaction is important for nucleolar localization of GZF1. Interacts with NSUN2. Interacts with NVL. Interacts (via N-terminus domain) with SETX. Interacts (via RRM1 and C-terminal RRM4/Arg/Gly-rich domains) with TERT; the interaction is important for nucleolar localization of TERT. Interacts with WDR46. Interacts with ZFP36. Interacts with LRRC34. Interacts with RRP1B. Interacts with HNRNPU; this interaction occurs during mitosis. Interacts with RIOK1; RIOK1 recruits NCL to PRMT5 for symmetrically methylation. Interacts with ZBTB7B. Interacts with MDK; this interaction promotes NCL clustering and lateral movements of this complex into lipid rafts leading to MDK internalization. Interacts with HDGF. Interacts with ALKBH2. Interacts with IGFBP5; this interaction is necessary for IGFBP5 localization to the nucleus. Interacts with DDX24 (when ubiquitinated); this interaction may be important during ribosome biogenesis. Post-translationally, some glutamate residues are glycylated by TTLL8. This modification occurs exclusively on glutamate residues and results in a glycine chain on the gamma-carboxyl group. Symmetrically methylated by PRMT5. Expressed in B-cells that have been induced to switch to various Ig isotypes.

The protein localises to the nucleus. It localises to the nucleolus. It is found in the cytoplasm. Functionally, nucleolin is the major nucleolar protein of growing eukaryotic cells. It is found associated with intranucleolar chromatin and pre-ribosomal particles. It induces chromatin decondensation by binding to histone H1. It is thought to play a role in pre-rRNA transcription and ribosome assembly. May play a role in the process of transcriptional elongation. Binds RNA oligonucleotides with 5'-UUAGGG-3' repeats more tightly than the telomeric single-stranded DNA 5'-TTAGGG-3' repeats. This chain is Nucleolin (Ncl), found in Mus musculus (Mouse).